The sequence spans 476 residues: Acyl-lipid omega-13 desaturase (476 aa).

One can recognise a Cytochrome b5 heme-binding domain in the interval 10–75 (GPALPSIPHQ…HLRVLERFRV (66 aa)). Residues H37 and H60 each contribute to the heme site. 2 helical membrane passes run 146-166 (PFVI…KLWW) and 168-188 (GAFI…AAMV). Positions 189 to 193 (HDGGH) match the Histidine box-1 motif. The Histidine box-2 motif lies at 224 to 229 (HNILHH). 3 helical membrane passes run 267 to 287 (FFSH…ISPL), 315 to 335 (YHST…TPFL), and 343 to 363 (LLLT…IAQV). Positions 410–414 (QSLHH) match the Histidine box-3 motif.

The protein belongs to the fatty acid desaturase type 1 family.

The protein localises to the membrane. It carries out the reaction a (9Z,12Z)-octadecadienoyl-containing glycerolipid + 2 Fe(II)-[cytochrome b5] + O2 + 2 H(+) = a (5Z,9Z,12Z)-octadecatrienoyl-containing glycerolipid + 2 Fe(III)-[cytochrome b5] + 2 H2O. The catalysed reaction is (9Z,12Z,15Z)-octadecatrienoyl-containing glycerolipid + 2 Fe(II)-[cytochrome b5] + O2 + 2 H(+) = a (5Z,9Z,12Z,15Z)-octadecatetraenoyl-containing glycerolipid + 2 Fe(III)-[cytochrome b5] + 2 H2O. It participates in lipid metabolism; polyunsaturated fatty acid biosynthesis. Its function is as follows. Front-end desaturase having a omega-13 desaturase activity for omega-9 unsaturated C18/C20 fatty acids. Strong substrate preferences for linoleic acid and alpha-linolenic acid for the production of pinolenic and coniferonic acids respectively. No desaturase activity for dihomo gamma-linolenic acid and eicosatertraenoic acid. The polypeptide is Acyl-lipid omega-13 desaturase (Chlamydomonas reinhardtii (Chlamydomonas smithii)).